We begin with the raw amino-acid sequence, 93 residues long: Small ribosomal subunit protein uS19 (93 aa).

It belongs to the universal ribosomal protein uS19 family.

Its function is as follows. Protein S19 forms a complex with S13 that binds strongly to the 16S ribosomal RNA. The polypeptide is Small ribosomal subunit protein uS19 (Campylobacter hominis (strain ATCC BAA-381 / DSM 21671 / CCUG 45161 / LMG 19568 / NCTC 13146 / CH001A)).